Consider the following 1172-residue polypeptide: MGLHLTVPGLRRDGRGVQSNSHDTSSKTTADISRCPQHTDAGLQRAATPGISRLLGISSRSVTLTKPRSATRGNSRYHWVPAAAGWTVGVIATLSLLASVSPLIRWIIKVPREFINDYLFNFPDTNFAWSFVLALLAAALTARKRIAWLVLLANMVLAAVVNAAEIAAGGNTAAESFGENLGFAVHVVAIVVLVLGYREFWAKVRRGALFRAAAVWLAGAVVGIVASWGLVELFPGSLAPDERLGYAANRVVGFALADPDLFTGRPHVFLNAIFGLFGAFALIGAAIVLFLSQRADNALTGEDESAIRGLLDLYGKDDSLGYFATRRDKSVVFASSGRACITYRVEVGVCLASGDPVGDHRAWPQAVDAWLRLCQTYGWAPGVMGASSQGAQTYREAGLTALELGDEAILRPADFKLSGPEMRGVRQAVTRARRAGLTVRIRRHRDIAEDEMAQTITRADSWRDTETERGFSMALGRLGDPADSDCLLVEAIDPHNQVLAMLSLVPWGTTGVSLDLMRRSPQSPNGTIELMVSELALHAESLGITRISLNFAVFRAAFEQGAQLGAGPVARLWRGLLVFFSRWWQLETLYRSNMKYQPEWVPRYACYEDARVIPRVGVASVIAEGFLVLPFSRRNRVHTGHHPAVPERLAATGLLHHDGSAPDVSGLRQVGLTNGDGVERRLPEQVRVRFDKLEKLRSSGIDAFPVGRPPSHTVAQALAADHQASVSVSGRIMRIRNYGGVLFAQLRDWSGEMQVLLDNSRLDQGCAADFNAATDLGDLVEMTGHMGASKTGTPSLIVSGWRLIGKCLRPLPNKWKGLLDPEARVRTRYLDLAVNAESRALITARSSVLRAVRETLFAKGFVEVETPILQQLHGGATARPFVTHINTYSMDLFLRIAPELYLKRLCVGGVERVFELGRAFRNEGVDFSHNPEFTLLEAYQAHADYLEWIDGCRELIQNAAQAANGAPIAMRPRTDKGSDGTRHHLEPVDISGIWPVRTVHDAISEALGERIDADTGLTTLRKLCDAAGVPYRTQWDAGAVVLELYEHLVECRTEQPTFYIDFPTSVSPLTRPHRSKRGVAERWDLVAWGIELGTAYSELTDPVEQRRRLQEQSLLAAGGDPEAMELDEDFLQAMEYAMPPTGGLGMGIDRVVMLITGRSIRETLPFPLAKPH.

The tract at residues 1 to 34 is disordered; the sequence is MGLHLTVPGLRRDGRGVQSNSHDTSSKTTADISR. A phosphatidylglycerol lysyltransferase region spans residues 1 to 663; the sequence is MGLHLTVPGL…LLHHDGSAPD (663 aa). Positions 17 to 31 are enriched in polar residues; sequence VQSNSHDTSSKTTAD. Helical transmembrane passes span 80-100, 122-142, 146-166, 177-197, 214-234, 272-292, and 612-632; these read VPAA…LASV, FPDT…ALTA, IAWL…AAEI, FGEN…VLGY, AVWL…VELF, AIFG…LFLS, and VIPR…LPFS. Residues 664–1172 are lysine--tRNA ligase; that stretch reads VSGLRQVGLT…TLPFPLAKPH (509 aa). A DNA-binding region (OB) is located at residues 726–804; sequence VSVSGRIMRI…SLIVSGWRLI (79 aa). Residues Asp1084 and Glu1091 each contribute to the Mg(2+) site.

In the N-terminal section; belongs to the LPG synthetase family. It in the C-terminal section; belongs to the class-II aminoacyl-tRNA synthetase family. The cofactor is Mg(2+).

It localises to the cell membrane. The catalysed reaction is tRNA(Lys) + L-lysine + ATP = L-lysyl-tRNA(Lys) + AMP + diphosphate. It catalyses the reaction L-lysyl-tRNA(Lys) + a 1,2-diacyl-sn-glycero-3-phospho-(1'-sn-glycerol) = a 1,2-diacyl-sn-glycero-3-phospho-1'-(3'-O-L-lysyl)-sn-glycerol + tRNA(Lys). Catalyzes the production of L-lysyl-tRNA(Lys)transfer and the transfer of a lysyl group from L-lysyl-tRNA(Lys) to membrane-bound phosphatidylglycerol (PG), which produces lysylphosphatidylglycerol (LPG), one of the components of the bacterial membrane with a positive net charge. LPG synthesis contributes to the resistance to cationic antimicrobial peptides (CAMPs) and likely protects M.tuberculosis against the CAMPs produced by competiting microorganisms (bacteriocins). In fact, the modification of anionic phosphatidylglycerol with positively charged L-lysine results in repulsion of the peptides. In Mycobacterium tuberculosis (strain F11), this protein is Lysylphosphatidylglycerol biosynthesis bifunctional protein LysX (lysX).